A 232-amino-acid polypeptide reads, in one-letter code: Orotidine 5'-phosphate decarboxylase (232 aa).

Residues Asp-13, Lys-35, 62–71 (DLKFHDIPNT), Thr-122, Arg-182, Gln-191, Gly-211, and Arg-212 each bind substrate. The active-site Proton donor is Lys-64.

The protein belongs to the OMP decarboxylase family. Type 1 subfamily. Homodimer.

It carries out the reaction orotidine 5'-phosphate + H(+) = UMP + CO2. It functions in the pathway pyrimidine metabolism; UMP biosynthesis via de novo pathway; UMP from orotate: step 2/2. Catalyzes the decarboxylation of orotidine 5'-monophosphate (OMP) to uridine 5'-monophosphate (UMP). The polypeptide is Orotidine 5'-phosphate decarboxylase (Pseudomonas fluorescens (strain SBW25)).